The following is a 345-amino-acid chain: Dihydroorotase (345 aa).

Zn(2+)-binding residues include His14 and His16. Residues 16–18 and Asn42 contribute to the substrate site; that span reads HLR. Positions 100, 137, and 175 each coordinate Zn(2+). N6-carboxylysine is present on Lys100. Substrate is bound at residue His137. A substrate-binding site is contributed by Leu220. Asp248 is a binding site for Zn(2+). Residue Asp248 is part of the active site. The substrate site is built by His252 and Ala264.

The protein belongs to the metallo-dependent hydrolases superfamily. DHOase family. Class II DHOase subfamily. As to quaternary structure, homodimer. Zn(2+) is required as a cofactor.

It carries out the reaction (S)-dihydroorotate + H2O = N-carbamoyl-L-aspartate + H(+). The protein operates within pyrimidine metabolism; UMP biosynthesis via de novo pathway; (S)-dihydroorotate from bicarbonate: step 3/3. Catalyzes the reversible cyclization of carbamoyl aspartate to dihydroorotate. The sequence is that of Dihydroorotase from Methylobacillus flagellatus (strain ATCC 51484 / DSM 6875 / VKM B-1610 / KT).